The sequence spans 255 residues: Pyridoxine 5'-phosphate synthase (255 aa).

The 3-amino-2-oxopropyl phosphate site is built by N8 and R19. The active-site Proton acceptor is H44. Residues R46 and H51 each coordinate 1-deoxy-D-xylulose 5-phosphate. Residue E74 is the Proton acceptor of the active site. Residue T111 coordinates 1-deoxy-D-xylulose 5-phosphate. The active-site Proton donor is H202. 3-amino-2-oxopropyl phosphate contacts are provided by residues D203 and 225–226; that span reads GH.

This sequence belongs to the PNP synthase family. Homooctamer; tetramer of dimers.

Its subcellular location is the cytoplasm. It catalyses the reaction 3-amino-2-oxopropyl phosphate + 1-deoxy-D-xylulose 5-phosphate = pyridoxine 5'-phosphate + phosphate + 2 H2O + H(+). Its pathway is cofactor biosynthesis; pyridoxine 5'-phosphate biosynthesis; pyridoxine 5'-phosphate from D-erythrose 4-phosphate: step 5/5. Its function is as follows. Catalyzes the complicated ring closure reaction between the two acyclic compounds 1-deoxy-D-xylulose-5-phosphate (DXP) and 3-amino-2-oxopropyl phosphate (1-amino-acetone-3-phosphate or AAP) to form pyridoxine 5'-phosphate (PNP) and inorganic phosphate. The polypeptide is Pyridoxine 5'-phosphate synthase (Xanthomonas oryzae pv. oryzae (strain MAFF 311018)).